Consider the following 452-residue polypeptide: cAMP-dependent protein kinase regulatory subunit (452 aa).

The segment at 28–212 is dimerization and phosphorylation; that stretch reads QFCANYFNSK…ELSKTLGSNF (185 aa). The interval 74–163 is disordered; sequence IMTTNKRQPS…APPVPKSKIP (90 aa). Residues 75–84 are compositionally biased toward polar residues; sequence MTTNKRQPSF. Residues 95 to 106 are compositionally biased toward basic and acidic residues; the sequence is SIDHHHDDDPKE. S173 is subject to Phosphoserine. Residues 213–330 and 333–451 contribute to the a nucleoside 3',5'-cyclic phosphate site; these read LFRQ…FLKD and VLSS…QGSS. 4 residues coordinate 3',5'-cyclic AMP: E278, R287, E399, and R408.

The protein belongs to the cAMP-dependent kinase regulatory chain family. In terms of assembly, tetramer, composed of 2 regulatory (R) and 2 catalytic (C) subunits. In the presence of cAMP it dissociates into 2 active monomeric C subunits and an R dimer.

The protein is cAMP-dependent protein kinase regulatory subunit (PKAR) of Debaryomyces hansenii (strain ATCC 36239 / CBS 767 / BCRC 21394 / JCM 1990 / NBRC 0083 / IGC 2968) (Yeast).